The sequence spans 88 residues: Apolipoprotein C-I (88 aa).

A signal peptide spans 1 to 26 (MRLILSLPVLVVVLSMVLEGPAPAQA).

This sequence belongs to the apolipoprotein C1 family.

Its subcellular location is the secreted. Functionally, inhibitor of lipoprotein binding to the low density lipoprotein (LDL) receptor, LDL receptor-related protein, and very low density lipoprotein (VLDL) receptor. Associates with high density lipoproteins (HDL) and the triacylglycerol-rich lipoproteins in the plasma and makes up about 10% of the protein of the VLDL and 2% of that of HDL. Appears to interfere directly with fatty acid uptake and is also the major plasma inhibitor of cholesteryl ester transfer protein (CETP). Binds free fatty acids and reduces their intracellular esterification. Modulates the interaction of APOE with beta-migrating VLDL and inhibits binding of beta-VLDL to the LDL receptor-related protein. The polypeptide is Apolipoprotein C-I (APOC1) (Lycaon pictus (African wild dog)).